A 403-amino-acid chain; its full sequence is Exodeoxyribonuclease 7 large subunit (403 aa).

It belongs to the XseA family. As to quaternary structure, heterooligomer composed of large and small subunits.

It is found in the cytoplasm. It catalyses the reaction Exonucleolytic cleavage in either 5'- to 3'- or 3'- to 5'-direction to yield nucleoside 5'-phosphates.. Bidirectionally degrades single-stranded DNA into large acid-insoluble oligonucleotides, which are then degraded further into small acid-soluble oligonucleotides. This Clostridium botulinum (strain Okra / Type B1) protein is Exodeoxyribonuclease 7 large subunit.